Consider the following 398-residue polypeptide: Secreted aspartic protease 3 (398 aa).

Positions 1-18 (MFLKNIFIALAIALLADA) are cleaved as a signal peptide. Positions 19 to 58 (TPTTFNNSPGFVALNFDVIKTHKNVTGPQGEINTNVNVKR) are cleaved as a propeptide — activation peptide. N-linked (GlcNAc...) asparagine glycosylation is present at asparagine 42. The Peptidase A1 domain maps to 72-384 (YASDITVGSN…DLDDNEISLA (313 aa)). The active site involves aspartate 90. 90–92 (DTG) lines the pepstatin A pocket. The span at 103 to 112 (VSCQAGQGQD) shows a compositional bias: polar residues. Residues 103–139 (VSCQAGQGQDPNFCKNEGTYSPSSSSSSQNLNSPFSI) form a disordered region. A disulfide bridge connects residues cysteine 105 and cysteine 116. The span at 123–138 (SPSSSSSSQNLNSPFS) shows a compositional bias: low complexity. 140-143 (EYGD) is a binding site for pepstatin A. 4 residues coordinate Zn(2+): histidine 188, aspartate 248, histidine 254, and aspartate 270. Residue aspartate 274 is part of the active site. 274 to 278 (DSGTT) is a pepstatin A binding site. An intrachain disulfide couples cysteine 312 to cysteine 350. A glycan (N-linked (GlcNAc...) asparagine) is linked at asparagine 313.

The protein belongs to the peptidase A1 family. As to quaternary structure, monomer.

The protein resides in the secreted. The enzyme catalyses Preferential cleavage at the carboxyl of hydrophobic amino acids, but fails to cleave 15-Leu-|-Tyr-16, 16-Tyr-|-Leu-17 and 24-Phe-|-Phe-25 of insulin B chain. Activates trypsinogen, and degrades keratin.. With respect to regulation, inhibited by pepstatin A analogs. Functionally, secreted aspartic peptidases (SAPs) are a group of ten acidic hydrolases considered as key virulence factors. These enzymes supply the fungus with nutrient amino acids as well as are able to degrade the selected host's proteins involved in the immune defense. Induces host inflammatory cytokine production in a proteolytic activity-independent way. Moreover, acts toward human hemoglobin though limited proteolysis to generate a variety of antimicrobial hemocidins, enabling to compete with the other microorganisms of the same physiological niche using the microbicidal peptides generated from the host protein. Plays a key role in defense against host by cleaving histatin-5 (Hst 5), a peptide from human saliva that carries out fungicidal activity. The cleavage rate decreases in an order of SAP2 &gt; SAP9 &gt; SAP3 &gt; SAP7 &gt; SAP4 &gt; SAP1 &gt; SAP8. The first cleavage occurs between residues 'Lys-17' and 'His-18' of Hst 5, giving DSHAKRHHGYKRKFHEK and HHSHRGY peptides. Simultaneously, the DSHAKRHHGYKRK peptide is also formed. Further fragmentation by SAP3 results in DSHAKRHHGY and KRKFHEK products. The polypeptide is Secreted aspartic protease 3 (Candida albicans (strain SC5314 / ATCC MYA-2876) (Yeast)).